The chain runs to 354 residues: Ornithine transcarbamylase, mitochondrial (354 aa).

The N-terminal 32 residues, 1 to 32 (MLFNLRILLNNAAFRNGHNFMVRNFRCGQPLQ), are a transit peptide targeting the mitochondrion. N6-acetyllysine; alternate is present on lysine 70. N6-succinyllysine; alternate is present on lysine 70. Lysine 80 is modified (N6-succinyllysine). Lysine 88 bears the N6-acetyllysine; alternate mark. Lysine 88 is modified (N6-succinyllysine; alternate). 90-93 (STRT) contributes to the carbamoyl phosphate binding site. At serine 133 the chain carries Phosphoserine. Arginine 141 contributes to the carbamoyl phosphate binding site. Lysine 144 carries the N6-acetyllysine; alternate modification. Lysine 144 carries the post-translational modification N6-succinyllysine; alternate. Carbamoyl phosphate-binding residues include histidine 168 and glutamine 171. Asparagine 199 provides a ligand contact to L-ornithine. Lysine 221, lysine 231, and lysine 238 each carry N6-acetyllysine; alternate. N6-succinyllysine; alternate is present on residues lysine 221, lysine 231, and lysine 238. Lysine 243 bears the N6-acetyllysine mark. L-ornithine-binding residues include aspartate 263, serine 267, and methionine 268. N6-succinyllysine is present on residues lysine 274 and lysine 289. Lysine 292 bears the N6-acetyllysine; alternate mark. At lysine 292 the chain carries N6-succinyllysine; alternate. The active-site Proton acceptor is the cysteine 303. 303-304 (CL) provides a ligand contact to carbamoyl phosphate. Lysine 307 bears the N6-acetyllysine; alternate mark. Residue lysine 307 is modified to N6-succinyllysine; alternate. Arginine 330 provides a ligand contact to carbamoyl phosphate.

This sequence belongs to the aspartate/ornithine carbamoyltransferase superfamily. OTCase family. As to quaternary structure, homotrimer. Acetylation at Lys-88 negatively regulates ornithine carbamoyltransferase activity in response to nutrient signals. Mainly expressed in liver and intestinal mucosa.

It is found in the mitochondrion matrix. It catalyses the reaction carbamoyl phosphate + L-ornithine = L-citrulline + phosphate + H(+). The protein operates within nitrogen metabolism; urea cycle; L-citrulline from L-ornithine and carbamoyl phosphate: step 1/1. Its activity is regulated as follows. Negatively regulated by lysine acetylation. Its function is as follows. Catalyzes the second step of the urea cycle, the condensation of carbamoyl phosphate with L-ornithine to form L-citrulline. The urea cycle ensures the detoxification of ammonia by converting it to urea for excretion. The polypeptide is Ornithine transcarbamylase, mitochondrial (Homo sapiens (Human)).